Consider the following 555-residue polypeptide: NAD-dependent protein deacetylase sirtuin-1 (555 aa).

The Nuclear localization signal motif lies at 39–46; the sequence is PPKRKKRK. The region spanning 44 to 304 is the Deacetylase sirtuin-type domain; the sequence is KRKDINTIED…NELCHRLGGE (261 aa). N6-acetyllysine is present on Lys-46. Positions 64–67 are required for interaction with the sumoylated form of CCAR2; sequence IIVL. NAD(+) contacts are provided by residues 69 to 88 and 153 to 156; these read GAGV…DGIY and QNID. His-171 acts as the Proton acceptor in catalysis. The Zn(2+) site is built by Cys-179 and Cys-182. Lys-185 is modified (N6-acetyllysine). Residues Cys-203 and Cys-206 each coordinate Zn(2+). S-nitrosocysteine occurs at positions 203 and 206. An N6-acetyllysine modification is found at Lys-238. The short motif at 241-247 is the Nuclear export signal element; sequence VDLLIVI. NAD(+) is bound by residues 248–250, 273–275, and Cys-290; these read GSS and NRE. Lys-321 carries the post-translational modification N6-acetyllysine. A disordered region spans residues 335–354; that stretch reads LPPTPLHISEDSSSPERTVP. Thr-338 bears the Phosphothreonine mark. Ser-343 carries the phosphoserine modification. The segment covering 345 to 354 has biased composition (polar residues); it reads DSSSPERTVP. Residue Thr-352 is modified to Phosphothreonine. At Lys-417 the chain carries N6-acetyllysine. Residues Ser-466 and Ser-468 each carry the phosphoserine modification. The tract at residues 469-529 is disordered; that stretch reads EDDALSSSSC…GGSGADGGDQ (61 aa). Positions 473–493 are enriched in low complexity; that stretch reads LSSSSCGSNSDSGTCQSPSLE. The segment covering 494–514 has biased composition (acidic residues); sequence EPLEDESEIEEFYNGLEDDAD. Ser-552 carries the phosphoserine modification.

This sequence belongs to the sirtuin family. Class I subfamily. As to quaternary structure, interacts with XBP1 isoform 2. Found in a complex with PCAF and MYOD1. Interacts with FOXO1; the interaction deacetylates FOXO1, resulting in its nuclear retention and promotion of its transcriptional activity Component of the eNoSC complex, composed of SIRT1, SUV39H1 and RRP8. Interacts with HES1, HEY2 and PML. Interacts with RPS19BP1/AROS. Interacts with CCAR2 (via N-terminus); the interaction disrupts the interaction between SIRT1 and p53/TP53. Interacts with SETD7; the interaction induces the dissociation of SIRT1 from p53/TP53 and increases p53/TP53 activity. Interacts with MYCN, NR1I2, CREBZF, TSC2, TLE1, FOS, JUN, NR0B2, PPARG, NCOR, IRS1, IRS2 and NMNAT1. Interacts with HNF1A; the interaction occurs under nutrient restriction. Interacts with SUZ12; the interaction mediates the association with the PRC4 histone methylation complex which is specific as an association with PCR2 and PCR3 complex variants is not found. Interacts with HIV-1 tat. Interacts with BCL6; leads to a epigenetic repression of specific target genes. Interacts with CLOCK, BMAL1 and PER2. Interacts with PPARA; the interaction seems to be modulated by NAD(+) levels. Interacts with NR1H3 and this interaction is inhibited in the presence of CCAR2. Interacts with CHEK2. Interacts with p53/TP53. Exhibits a preferential interaction with sumoylated CCAR2 over its unmodified form. Interacts with PACS2. Interacts with SIRT7. Interacts with PUS7. Interacts with TULP3. Interacts with MORN3; the interaction enhances the ubiquitination of p53/TP53. Zn(2+) serves as cofactor. In terms of processing, methylated on multiple lysine residues; methylation is enhanced after DNA damage and is dispensable for deacetylase activity toward p53/TP53. Post-translationally, phosphorylated. Phosphorylated by STK4/MST1, resulting in inhibition of SIRT1-mediated p53/TP53 deacetylation. Phosphorylation by MAPK8/JNK1 at Thr-338 leads to increased nuclear localization and enzymatic activity. Phosphorylation at Thr-338 by DYRK1A and DYRK3 activates deacetylase activity and promotes cell survival. Phosphorylated by CaMK2, leading to increased p53/TP53 and NF-kappa-B p65/RELA deacetylation activity. S-nitrosylated by GAPDH, leading to inhibit the NAD-dependent protein deacetylase activity. In terms of processing, acetylated at various Lys residues. Deacetylated via an autocatalytic mechanism. Autodeacetylation at Lys-46 promotes its protein deacetylase activity. Post-translationally, ubiquitinated; leading to degradation. Deubiquitinated by USP22; leading to stabilization.

The protein localises to the nucleus. It is found in the PML body. The protein resides in the cytoplasm. The enzyme catalyses N(6)-acetyl-L-lysyl-[protein] + NAD(+) + H2O = 2''-O-acetyl-ADP-D-ribose + nicotinamide + L-lysyl-[protein]. The catalysed reaction is N(6)-propanoyl-L-lysyl-[protein] + NAD(+) + H2O = 3''-O-propanoyl-ADP-D-ribose + nicotinamide + L-lysyl-[protein]. It carries out the reaction N(6)-(2E)-butenoyl-L-lysyl-[protein] + NAD(+) + H2O = 2''-O-(2E)-but-2-enoyl-ADP-D-ribose + nicotinamide + L-lysyl-[protein]. With respect to regulation, inhibited by nicotinamide. Activated by resveratrol (3,5,4'-trihydroxy-trans-stilbene), butein (3,4,2',4'-tetrahydroxychalcone), piceatannol (3,5,3',4'-tetrahydroxy-trans-stilbene), Isoliquiritigenin (4,2',4'-trihydroxychalcone), fisetin (3,7,3',4'-tetrahydroxyflavone) and quercetin (3,5,7,3',4'-pentahydroxyflavone). MAPK8/JNK1 and RPS19BP1/AROS act as positive regulators of deacetylation activity. Negatively regulated by CCAR2. Its function is as follows. NAD-dependent protein deacetylase that links transcriptional regulation directly to intracellular energetics and participates in the coordination of several separated cellular functions such as cell cycle, response to DNA damage, metabolism, apoptosis and autophagy. Can modulate chromatin function through deacetylation of histones and can promote alterations in the methylation of histones and DNA, leading to transcriptional repression. Deacetylates a broad range of transcription factors and coregulators, thereby regulating target gene expression positively and negatively. Serves as a sensor of the cytosolic ratio of NAD(+)/NADH which is altered by glucose deprivation and metabolic changes associated with caloric restriction. Is essential in skeletal muscle cell differentiation and in response to low nutrients mediates the inhibitory effect on skeletal myoblast differentiation which also involves 5'-AMP-activated protein kinase (AMPK) and nicotinamide phosphoribosyltransferase (NAMPT). Component of the eNoSC (energy-dependent nucleolar silencing) complex, a complex that mediates silencing of rDNA in response to intracellular energy status and acts by recruiting histone-modifying enzymes. The eNoSC complex is able to sense the energy status of cell: upon glucose starvation, elevation of NAD(+)/NADP(+) ratio activates SIRT1, leading to histone H3 deacetylation followed by dimethylation of H3 at 'Lys-9' (H3K9me2) by SUV39H1 and the formation of silent chromatin in the rDNA locus. Deacetylates 'Lys-266' of SUV39H1, leading to its activation. Inhibits skeletal muscle differentiation by deacetylating PCAF and MYOD1. Deacetylates H2A and 'Lys-26' of H1-4. Deacetylates 'Lys-16' of histone H4 (in vitro). Involved in NR0B2/SHP corepression function through chromatin remodeling: Recruited to LRH1 target gene promoters by NR0B2/SHP thereby stimulating histone H3 and H4 deacetylation leading to transcriptional repression. Proposed to contribute to genomic integrity via positive regulation of telomere length; however, reports on localization to pericentromeric heterochromatin are conflicting. Proposed to play a role in constitutive heterochromatin (CH) formation and/or maintenance through regulation of the available pool of nuclear SUV39H1. Upon oxidative/metabolic stress decreases SUV39H1 degradation by inhibiting SUV39H1 polyubiquitination by MDM2. This increase in SUV39H1 levels enhances SUV39H1 turnover in CH, which in turn seems to accelerate renewal of the heterochromatin which correlates with greater genomic integrity during stress response. Deacetylates 'Lys-382' of p53/TP53 and impairs its ability to induce transcription-dependent proapoptotic program and modulate cell senescence. Deacetylates TAF1B and thereby represses rDNA transcription by the RNA polymerase I. Deacetylates MYC, promotes the association of MYC with MAX and decreases MYC stability leading to compromised transformational capability. Deacetylates FOXO3 in response to oxidative stress thereby increasing its ability to induce cell cycle arrest and resistance to oxidative stress but inhibiting FOXO3-mediated induction of apoptosis transcriptional activity; also leading to FOXO3 ubiquitination and protesomal degradation. Appears to have a similar effect on MLLT7/FOXO4 in regulation of transcriptional activity and apoptosis. Deacetylates DNMT1; thereby impairs DNMT1 methyltransferase-independent transcription repressor activity, modulates DNMT1 cell cycle regulatory function and DNMT1-mediated gene silencing. Deacetylates RELA/NF-kappa-B p65 thereby inhibiting its transactivating potential and augments apoptosis in response to TNF-alpha. Deacetylates HIF1A, KAT5/TIP60, RB1 and HIC1. Deacetylates FOXO1 resulting in its nuclear retention and enhancement of its transcriptional activity leading to increased gluconeogenesis in liver. Inhibits E2F1 transcriptional activity and apoptotic function, possibly by deacetylation. Involved in HES1- and HEY2-mediated transcriptional repression. In cooperation with MYCN seems to be involved in transcriptional repression of DUSP6/MAPK3 leading to MYCN stabilization by phosphorylation at 'Ser-62'. Deacetylates MEF2D. Required for antagonist-mediated transcription suppression of AR-dependent genes which may be linked to local deacetylation of histone H3. Represses HNF1A-mediated transcription. Required for the repression of ESRRG by CREBZF. Deacetylates NR1H3 AND NR1H2 and deacetylation of NR1H3 at 'Lys-434' positively regulates transcription of NR1H3:RXR target genes, promotes NR1H3 proteasomal degradation and results in cholesterol efflux; a promoter clearing mechanism after reach round of transcription is proposed. Involved in lipid metabolism: deacetylates LPIN1, thereby inhibiting diacylglycerol synthesis. Implicated in regulation of adipogenesis and fat mobilization in white adipocytes by repression of PPARG which probably involves association with NCOR1 and SMRT/NCOR2. Deacetylates p300/EP300 and PRMT1. Deacetylates ACSS2 leading to its activation, and HMGCS1 deacetylation. Involved in liver and muscle metabolism. Through deacetylation and activation of PPARGC1A is required to activate fatty acid oxidation in skeletal muscle under low-glucose conditions and is involved in glucose homeostasis. Involved in regulation of PPARA and fatty acid beta-oxidation in liver. Involved in positive regulation of insulin secretion in pancreatic beta cells in response to glucose; the function seems to imply transcriptional repression of UCP2. Proposed to deacetylate IRS2 thereby facilitating its insulin-induced tyrosine phosphorylation. Deacetylates SREBF1 isoform SREBP-1C thereby decreasing its stability and transactivation in lipogenic gene expression. Involved in DNA damage response by repressing genes which are involved in DNA repair, such as XPC and TP73, deacetylating XRCC6/Ku70, and facilitating recruitment of additional factors to sites of damaged DNA, such as SIRT1-deacetylated NBN can recruit ATM to initiate DNA repair and SIRT1-deacetylated XPA interacts with RPA2. Also involved in DNA repair of DNA double-strand breaks by homologous recombination and specifically single-strand annealing independently of XRCC6/Ku70 and NBN. Promotes DNA double-strand breaks by mediating deacetylation of SIRT6. Transcriptional suppression of XPC probably involves an E2F4:RBL2 suppressor complex and protein kinase B (AKT) signaling. Transcriptional suppression of TP73 probably involves E2F4 and PCAF. Deacetylates WRN thereby regulating its helicase and exonuclease activities and regulates WRN nuclear translocation in response to DNA damage. Deacetylates APEX1 at 'Lys-6' and 'Lys-7' and stimulates cellular AP endonuclease activity by promoting the association of APEX1 to XRCC1. Catalyzes deacetylation of ERCC4/XPF, thereby impairing interaction with ERCC1 and nucleotide excision repair (NER). Increases p53/TP53-mediated transcription-independent apoptosis by blocking nuclear translocation of cytoplasmic p53/TP53 and probably redirecting it to mitochondria. Deacetylates XRCC6/Ku70 at 'Lys-539' and 'Lys-542' causing it to sequester BAX away from mitochondria thereby inhibiting stress-induced apoptosis. Is involved in autophagy, presumably by deacetylating ATG5, ATG7 and MAP1LC3B/ATG8. Deacetylates AKT1 which leads to enhanced binding of AKT1 and PDK1 to PIP3 and promotes their activation. Proposed to play role in regulation of STK11/LBK1-dependent AMPK signaling pathways implicated in cellular senescence which seems to involve the regulation of the acetylation status of STK11/LBK1. Can deacetylate STK11/LBK1 and thereby increase its activity, cytoplasmic localization and association with STRAD; however, the relevance of such activity in normal cells is unclear. In endothelial cells is shown to inhibit STK11/LBK1 activity and to promote its degradation. Deacetylates SMAD7 at 'Lys-64' and 'Lys-70' thereby promoting its degradation. Deacetylates CIITA and augments its MHC class II transactivation and contributes to its stability. Deacetylates MECOM/EVI1. Deacetylates PML at 'Lys-487' and this deacetylation promotes PML control of PER2 nuclear localization. During the neurogenic transition, represses selective NOTCH1-target genes through histone deacetylation in a BCL6-dependent manner and leading to neuronal differentiation. Regulates the circadian expression of several core clock genes, including BMAL1, RORC, PER2 and CRY1 and plays a critical role in maintaining a controlled rhythmicity in histone acetylation, thereby contributing to circadian chromatin remodeling. Deacetylates BMAL1 and histones at the circadian gene promoters in order to facilitate repression by inhibitory components of the circadian oscillator. Deacetylates PER2, facilitating its ubiquitination and degradation by the proteasome. Protects cardiomyocytes against palmitate-induced apoptosis. Deacetylates XBP1 isoform 2; deacetylation decreases protein stability of XBP1 isoform 2 and inhibits its transcriptional activity. Deacetylates PCK1 and directs its activity toward phosphoenolpyruvate production promoting gluconeogenesis. Involved in the CCAR2-mediated regulation of PCK1 and NR1D1. Deacetylates CTNB1 at 'Lys-49'. In POMC (pro-opiomelanocortin) neurons, required for leptin-induced activation of PI3K signaling. In addition to protein deacetylase activity, also acts as a protein-lysine deacylase by mediating protein depropionylation and decrotonylation. Mediates depropionylation of Osterix (SP7). Catalyzes decrotonylation of histones; it however does not represent a major histone decrotonylase. Deacetylates SOX9; promoting SOX9 nuclear localization and transactivation activity. Involved in the regulation of centrosome duplication. Deacetylates CENATAC in G1 phase, allowing for SASS6 accumulation on the centrosome and subsequent procentriole assembly. Deacetylates NDC80/HEC1. This is NAD-dependent protein deacetylase sirtuin-1 from Rattus norvegicus (Rat).